Reading from the N-terminus, the 877-residue chain is Probable sulfate permease C3H7.02 (877 aa).

The next 13 membrane-spanning stretches (helical) occupy residues 133–153 (WLVYDFIAGITVGCVVVPQGM), 161–181 (LPAQYGLYSSFVGVAIYCIFA), 186–206 (VSIGPVAVMSLVTSKVIANVQ), 221–241 (LALLAGAITCGLGLLRLGFII), 243–263 (FIPVPAVAGFTTGSALNIMAG), 292–312 (LPHTKVDAAFGLVSLFILYLV), 329–349 (VFFLTNVLRSAVIIIVGTAIS), 384–404 (LCADLASELPVSVIVLLLEHI), 424–444 (LIAMGATNLIGVFFHAYPATG), 461–481 (LGGIFTAGVVVLALYCLTGAF), 484–504 (IPNAVLSAVIIHSVFDLIIPW), 518–538 (ALIFICAVFVSVFSSIENGIY), and 543–563 (LSAALLLFRIAKPSGSFLGIL). The 154-residue stretch at 594–747 (NLTVRDPPAG…SRSIEVGSAA (154 aa)) folds into the STAS domain. 2 disordered regions span residues 643–663 (KASDRPWNDPAPRKKKNAPEV) and 793–821 (ADSDTISVSDDKDKKVEGHRPSQDPTFSH). Residues 801–821 (SDDKDKKVEGHRPSQDPTFSH) are compositionally biased toward basic and acidic residues.

It belongs to the SLC26A/SulP transporter (TC 2.A.53) family.

Its subcellular location is the membrane. Its function is as follows. High affinity uptake of sulfate into the cell. The chain is Probable sulfate permease C3H7.02 from Schizosaccharomyces pombe (strain 972 / ATCC 24843) (Fission yeast).